A 173-amino-acid polypeptide reads, in one-letter code: 6,7-dimethyl-8-ribityllumazine synthase (173 aa).

5-amino-6-(D-ribitylamino)uracil contacts are provided by residues Y34, 65–67 (ALE), and 94–96 (CVI). 99–100 (ET) contacts (2S)-2-hydroxy-3-oxobutyl phosphate. The active-site Proton donor is H102. N127 contributes to the 5-amino-6-(D-ribitylamino)uracil binding site. R141 lines the (2S)-2-hydroxy-3-oxobutyl phosphate pocket.

The protein belongs to the DMRL synthase family.

The catalysed reaction is (2S)-2-hydroxy-3-oxobutyl phosphate + 5-amino-6-(D-ribitylamino)uracil = 6,7-dimethyl-8-(1-D-ribityl)lumazine + phosphate + 2 H2O + H(+). Its pathway is cofactor biosynthesis; riboflavin biosynthesis; riboflavin from 2-hydroxy-3-oxobutyl phosphate and 5-amino-6-(D-ribitylamino)uracil: step 1/2. Functionally, catalyzes the formation of 6,7-dimethyl-8-ribityllumazine by condensation of 5-amino-6-(D-ribitylamino)uracil with 3,4-dihydroxy-2-butanone 4-phosphate. This is the penultimate step in the biosynthesis of riboflavin. This is 6,7-dimethyl-8-ribityllumazine synthase from Methylorubrum extorquens (strain CM4 / NCIMB 13688) (Methylobacterium extorquens).